A 289-amino-acid chain; its full sequence is Kinetochore-associated protein MTW1 (289 aa).

Positions 105 to 147 form a coiled coil; it reads RLENQKDLVIVDENELKKSEEKLREKVNDVELAFKKNEMLLKR.

It belongs to the mis12 family. Component of the MIND kinetochore complex, which is composed of at least MTW1, NNF1, NSL1 and DSN1.

The protein localises to the chromosome. It localises to the centromere. It is found in the kinetochore. Its subcellular location is the cytoplasm. The protein resides in the cytoskeleton. The protein localises to the spindle pole. In terms of biological role, acts as an essential component of the kinetochore MIND complex, which is required for the spindle checkpoint and kinetochore integrity. MIND plays a role in establishing a bipolar spindle-kinetochore interaction by joining kinetochore subunits contacting DNA to those contacting microtubules. In Saccharomyces cerevisiae (strain ATCC 204508 / S288c) (Baker's yeast), this protein is Kinetochore-associated protein MTW1 (MTW1).